A 416-amino-acid polypeptide reads, in one-letter code: D-amino acid dehydrogenase (416 aa).

Residue 3-17 (VIVLGAGIIGVTSAY) participates in FAD binding.

The protein belongs to the DadA oxidoreductase family. Requires FAD as cofactor.

It carries out the reaction a D-alpha-amino acid + A + H2O = a 2-oxocarboxylate + AH2 + NH4(+). It functions in the pathway amino-acid degradation; D-alanine degradation; NH(3) and pyruvate from D-alanine: step 1/1. Its function is as follows. Oxidative deamination of D-amino acids. In Sinorhizobium medicae (strain WSM419) (Ensifer medicae), this protein is D-amino acid dehydrogenase.